The primary structure comprises 441 residues: Putative F-box/FBD/LRR-repeat protein At4g00315 (441 aa).

Positions 1 to 47 (MDKTSQLPDELLVKVLSFLPTKDAVRTSLLSMRWKSLWMWLPKLEYD) constitute an F-box domain. LRR repeat units follow at residues 57–82 (QGLA…SLKL), 87–115 (IGSI…SLKL), 137–164 (ILKL…FLGR), 165–190 (VTYS…VVER), 211–236 (LKMS…KVTD), 243–271 (SDNE…DFVL), 293–318 (LGVY…KICS), and 319–344 (CDSD…EAYV). In terms of domain architecture, FBD spans 358 to 410 (QWGNQLNCVPKCLLSSLETFKWSEMYGLLQNQMDVAKYILRNARCLKSATIFF).

This Arabidopsis thaliana (Mouse-ear cress) protein is Putative F-box/FBD/LRR-repeat protein At4g00315.